Reading from the N-terminus, the 98-residue chain is NADH-ubiquinone oxidoreductase chain 4L (98 aa).

3 consecutive transmembrane segments (helical) span residues 2–22 (PFIY…LLLF), 30–50 (LLCL…TTLG), and 61–81 (IILM…LVTI).

This sequence belongs to the complex I subunit 4L family. Core subunit of respiratory chain NADH dehydrogenase (Complex I) which is composed of 45 different subunits.

The protein localises to the mitochondrion inner membrane. The enzyme catalyses a ubiquinone + NADH + 5 H(+)(in) = a ubiquinol + NAD(+) + 4 H(+)(out). Its function is as follows. Core subunit of the mitochondrial membrane respiratory chain NADH dehydrogenase (Complex I) which catalyzes electron transfer from NADH through the respiratory chain, using ubiquinone as an electron acceptor. Part of the enzyme membrane arm which is embedded in the lipid bilayer and involved in proton translocation. The sequence is that of NADH-ubiquinone oxidoreductase chain 4L (MT-ND4L) from Bradypus tridactylus (Pale-throated three-toed sloth).